The sequence spans 351 residues: Photosystem II D2 protein (351 aa).

The chain crosses the membrane as a helical span at residues 39–59 (TAYLAVGGWFTGTTFVTSWYT). His-116 provides a ligand contact to chlorophyll a. A helical membrane pass occupies residues 123–139 (GFCLRQFEIARLVGIRP). The pheophytin a site is built by Gln-128 and Asn-141. The chain crosses the membrane as a helical span at residues 151-164 (IFVSVFLLYPLGQA). His-196 is a chlorophyll a binding site. Residues 206–226 (GALLCAIHGATVENTLFEDGD) traverse the membrane as a helical segment. A plastoquinone-binding residues include His-213 and Phe-260. His-213 contributes to the Fe cation binding site. Residue His-267 coordinates Fe cation. Residues 277–293 (GLWTSAIGIVGLALNLR) form a helical membrane-spanning segment.

Belongs to the reaction center PufL/M/PsbA/D family. As to quaternary structure, PSII is composed of 1 copy each of membrane proteins PsbA, PsbB, PsbC, PsbD, PsbE, PsbF, PsbH, PsbI, PsbJ, PsbK, PsbL, PsbM, PsbT, PsbX, PsbY, PsbZ, Psb30/Ycf12, at least 3 peripheral proteins of the oxygen-evolving complex and a large number of cofactors. It forms dimeric complexes. The D1/D2 heterodimer binds P680, chlorophylls that are the primary electron donor of PSII, and subsequent electron acceptors. It shares a non-heme iron and each subunit binds pheophytin, quinone, additional chlorophylls, carotenoids and lipids. There is also a Cl(-1) ion associated with D1 and D2, which is required for oxygen evolution. The PSII complex binds additional chlorophylls, carotenoids and specific lipids. is required as a cofactor.

The protein resides in the plastid. It is found in the chloroplast thylakoid membrane. The enzyme catalyses 2 a plastoquinone + 4 hnu + 2 H2O = 2 a plastoquinol + O2. Functionally, photosystem II (PSII) is a light-driven water:plastoquinone oxidoreductase that uses light energy to abstract electrons from H(2)O, generating O(2) and a proton gradient subsequently used for ATP formation. It consists of a core antenna complex that captures photons, and an electron transfer chain that converts photonic excitation into a charge separation. The D1/D2 (PsbA/PsbD) reaction center heterodimer binds P680, the primary electron donor of PSII as well as several subsequent electron acceptors. D2 is needed for assembly of a stable PSII complex. This Heterosigma akashiwo (strain NIES-293 / 8280G21-1) protein is Photosystem II D2 protein.